The sequence spans 943 residues: Protein translocase subunit SecA (943 aa).

ATP is bound by residues Gln-90, 108-112 (GEGKT), and Asp-509. The tract at residues 535 to 564 (PDNEHKPPIPKQRNSKSKGGFSKKASSKLK) is disordered.

The protein belongs to the SecA family. As to quaternary structure, monomer and homodimer. Part of the essential Sec protein translocation apparatus which comprises SecA, SecYEG and auxiliary proteins SecDF. Other proteins may also be involved.

The protein localises to the cell inner membrane. Its subcellular location is the cellular thylakoid membrane. It localises to the cytoplasm. It catalyses the reaction ATP + H2O + cellular proteinSide 1 = ADP + phosphate + cellular proteinSide 2.. Functionally, part of the Sec protein translocase complex. Interacts with the SecYEG preprotein conducting channel. Has a central role in coupling the hydrolysis of ATP to the transfer of proteins into and across the cell membrane, serving as an ATP-driven molecular motor driving the stepwise translocation of polypeptide chains across the membrane. Probably participates in protein translocation into and across both the cytoplasmic and thylakoid membranes in cyanobacterial cells. This is Protein translocase subunit SecA from Prochlorococcus marinus (strain MIT 9215).